The sequence spans 194 residues: MRKASLSRKTNETSVHLTLELDGEGTSTIETGIGFFDHMLTLLAKHGGINLDLSCDGDLEVDQHHTVEDIGIVLGQTLREALGNKEGITRYANVMSPMDEALSSIAFDISGRSYLVYNVEGLKEKVGTFDTELVQEFFQAFASNAQVTLHINLLYGVNSHHIIESIFKGFGRVIRQGCSIDLNQKGIPSTKGSL.

Belongs to the imidazoleglycerol-phosphate dehydratase family.

It is found in the cytoplasm. The catalysed reaction is D-erythro-1-(imidazol-4-yl)glycerol 3-phosphate = 3-(imidazol-4-yl)-2-oxopropyl phosphate + H2O. The protein operates within amino-acid biosynthesis; L-histidine biosynthesis; L-histidine from 5-phospho-alpha-D-ribose 1-diphosphate: step 6/9. The chain is Imidazoleglycerol-phosphate dehydratase from Oceanobacillus iheyensis (strain DSM 14371 / CIP 107618 / JCM 11309 / KCTC 3954 / HTE831).